Here is a 74-residue protein sequence, read N- to C-terminus: uncharacterized protein (74 aa).

Positions 1 to 25 (MMMTDLPENIRKTAVALLRLGEATA) are cleaved as a signal peptide.

This is an uncharacterized protein from Archaeoglobus fulgidus (strain ATCC 49558 / DSM 4304 / JCM 9628 / NBRC 100126 / VC-16).